A 430-amino-acid chain; its full sequence is Serine--tRNA ligase (430 aa).

Position 235-237 (235-237 (TSE)) interacts with L-serine. 266 to 268 (RSE) provides a ligand contact to ATP. Glu289 is a binding site for L-serine. 353 to 356 (EISS) is a binding site for ATP. Ser388 provides a ligand contact to L-serine.

Belongs to the class-II aminoacyl-tRNA synthetase family. Type-1 seryl-tRNA synthetase subfamily. Homodimer. The tRNA molecule binds across the dimer.

It is found in the cytoplasm. It carries out the reaction tRNA(Ser) + L-serine + ATP = L-seryl-tRNA(Ser) + AMP + diphosphate + H(+). It catalyses the reaction tRNA(Sec) + L-serine + ATP = L-seryl-tRNA(Sec) + AMP + diphosphate + H(+). It participates in aminoacyl-tRNA biosynthesis; selenocysteinyl-tRNA(Sec) biosynthesis; L-seryl-tRNA(Sec) from L-serine and tRNA(Sec): step 1/1. Functionally, catalyzes the attachment of serine to tRNA(Ser). Is also able to aminoacylate tRNA(Sec) with serine, to form the misacylated tRNA L-seryl-tRNA(Sec), which will be further converted into selenocysteinyl-tRNA(Sec). This Azoarcus sp. (strain BH72) protein is Serine--tRNA ligase.